We begin with the raw amino-acid sequence, 512 residues long: Replication initiation protein (512 aa).

In terms of biological role, essential for replication. Binds specifically to a 60-bp region corresponding to the putative origin of replication of pXO2. Also binds nonspecifically to single-stranded DNA with lower affinity. This is Replication initiation protein (repS) from Bacillus anthracis.